Reading from the N-terminus, the 1358-residue chain is DNA-directed RNA polymerase subunit beta (1358 aa).

This sequence belongs to the RNA polymerase beta chain family. As to quaternary structure, the RNAP catalytic core consists of 2 alpha, 1 beta, 1 beta' and 1 omega subunit. When a sigma factor is associated with the core the holoenzyme is formed, which can initiate transcription.

It catalyses the reaction RNA(n) + a ribonucleoside 5'-triphosphate = RNA(n+1) + diphosphate. Functionally, DNA-dependent RNA polymerase catalyzes the transcription of DNA into RNA using the four ribonucleoside triphosphates as substrates. The protein is DNA-directed RNA polymerase subunit beta of Francisella tularensis subsp. tularensis (strain FSC 198).